We begin with the raw amino-acid sequence, 182 residues long: Ribosome maturation factor RimM (182 aa).

Residues 102 to 182 (EEGDYYWKDL…TIEVDWDPGF (81 aa)) enclose the PRC barrel domain.

Belongs to the RimM family. As to quaternary structure, binds ribosomal protein uS19.

Its subcellular location is the cytoplasm. Functionally, an accessory protein needed during the final step in the assembly of 30S ribosomal subunit, possibly for assembly of the head region. Essential for efficient processing of 16S rRNA. May be needed both before and after RbfA during the maturation of 16S rRNA. It has affinity for free ribosomal 30S subunits but not for 70S ribosomes. The sequence is that of Ribosome maturation factor RimM from Salmonella gallinarum (strain 287/91 / NCTC 13346).